Consider the following 530-residue polypeptide: Anthranilate synthase component 1, pyocyanine specific (530 aa).

331-332 (GT) contributes to the substrate binding site. Position 364 (Glu-364) interacts with Mg(2+). Residues Tyr-452, Arg-472, 486–488 (GAG), and Gly-488 contribute to the substrate site. Position 501 (Glu-501) interacts with Mg(2+).

Belongs to the anthranilate synthase component I family. Heterotetramer consisting of two non-identical subunits: a beta subunit (PhnB) and a large alpha subunit (PhnA). Mg(2+) serves as cofactor.

It catalyses the reaction chorismate + L-glutamine = anthranilate + pyruvate + L-glutamate + H(+). Its pathway is secondary metabolite biosynthesis; pyocyanine biosynthesis. Part of a heterotetrameric complex that catalyzes the two-step biosynthesis of anthranilate, a precursor for Pseudomonas quinolone signal (2-heptyl-3-hydroxy-4-quinolone; PQS) production which is required to induce the genes for the biosynthesis of the virulence factor pyocyanine (PCN), a characteristic blue-green phenazine pigment produced by P.aeruginosa. In the first step, the glutamine-binding beta subunit (PhnB) of anthranilate synthase (AS) provides the glutamine amidotransferase activity which generates ammonia as a substrate that, along with chorismate, is used in the second step, catalyzed by the large alpha subunit of AS (PhnA) to produce anthranilate. The protein is Anthranilate synthase component 1, pyocyanine specific of Pseudomonas aeruginosa (strain ATCC 15692 / DSM 22644 / CIP 104116 / JCM 14847 / LMG 12228 / 1C / PRS 101 / PAO1).